Consider the following 793-residue polypeptide: Phenylalanine--tRNA ligase beta subunit (793 aa).

In terms of domain architecture, tRNA-binding spans 39-148 (AKPFTGVVVG…EDAPVGLNIR (110 aa)). One can recognise a B5 domain in the interval 400–476 (PKREAIELNQ…RIHGYDNIQI (77 aa)). Positions 454, 460, 463, and 464 each coordinate Mg(2+). The FDX-ACB domain maps to 698 to 791 (SRFPSVRRDI…LENTYQATLR (94 aa)).

It belongs to the phenylalanyl-tRNA synthetase beta subunit family. Type 1 subfamily. Tetramer of two alpha and two beta subunits. Mg(2+) serves as cofactor.

The protein resides in the cytoplasm. It carries out the reaction tRNA(Phe) + L-phenylalanine + ATP = L-phenylalanyl-tRNA(Phe) + AMP + diphosphate + H(+). In Acinetobacter baylyi (strain ATCC 33305 / BD413 / ADP1), this protein is Phenylalanine--tRNA ligase beta subunit.